A 251-amino-acid polypeptide reads, in one-letter code: 3-deoxy-manno-octulosonate cytidylyltransferase (251 aa).

It belongs to the KdsB family.

It localises to the cytoplasm. The enzyme catalyses 3-deoxy-alpha-D-manno-oct-2-ulosonate + CTP = CMP-3-deoxy-beta-D-manno-octulosonate + diphosphate. It functions in the pathway nucleotide-sugar biosynthesis; CMP-3-deoxy-D-manno-octulosonate biosynthesis; CMP-3-deoxy-D-manno-octulosonate from 3-deoxy-D-manno-octulosonate and CTP: step 1/1. Its pathway is bacterial outer membrane biogenesis; lipopolysaccharide biosynthesis. Its function is as follows. Activates KDO (a required 8-carbon sugar) for incorporation into bacterial lipopolysaccharide in Gram-negative bacteria. The sequence is that of 3-deoxy-manno-octulosonate cytidylyltransferase from Rhizobium etli (strain CIAT 652).